The chain runs to 198 residues: Leucine-rich melanocyte differentiation-associated protein (198 aa).

4 LRR repeats span residues glutamate 2–serine 22, serine 26–proline 47, arginine 48–leucine 69, and alanine 75–glutamate 95. Residues lysine 96–arginine 134 form the LRRCT domain.

In terms of tissue distribution, in the embryo, expressed in melanoblasts. In the fetus, expressed in melanocytes. Not detected in retinal pigment epithelial cells.

In terms of biological role, required for melanocyte differentiation. The polypeptide is Leucine-rich melanocyte differentiation-associated protein (Homo sapiens (Human)).